A 142-amino-acid polypeptide reads, in one-letter code: Large ribosomal subunit protein uL13 (142 aa).

It belongs to the universal ribosomal protein uL13 family. Part of the 50S ribosomal subunit.

Functionally, this protein is one of the early assembly proteins of the 50S ribosomal subunit, although it is not seen to bind rRNA by itself. It is important during the early stages of 50S assembly. In Bordetella petrii (strain ATCC BAA-461 / DSM 12804 / CCUG 43448), this protein is Large ribosomal subunit protein uL13.